Here is a 548-residue protein sequence, read N- to C-terminus: Chaperonin GroEL (548 aa).

ATP-binding positions include Thr30–Pro33, Lys51, Asp87–Thr91, Gly415, and Asp495.

This sequence belongs to the chaperonin (HSP60) family. As to quaternary structure, forms a cylinder of 14 subunits composed of two heptameric rings stacked back-to-back. Interacts with the co-chaperonin GroES.

The protein localises to the cytoplasm. The enzyme catalyses ATP + H2O + a folded polypeptide = ADP + phosphate + an unfolded polypeptide.. Functionally, together with its co-chaperonin GroES, plays an essential role in assisting protein folding. The GroEL-GroES system forms a nano-cage that allows encapsulation of the non-native substrate proteins and provides a physical environment optimized to promote and accelerate protein folding. In Photorhabdus laumondii subsp. laumondii (strain DSM 15139 / CIP 105565 / TT01) (Photorhabdus luminescens subsp. laumondii), this protein is Chaperonin GroEL.